Consider the following 1193-residue polypeptide: DNA-directed RNA polymerase subunit beta (1193 aa).

The segment covering glutamate 1149–aspartate 1162 has biased composition (acidic residues). A disordered region spans residues glutamate 1149–glutamate 1193. The segment covering aspartate 1184–glutamate 1193 has biased composition (basic and acidic residues).

The protein belongs to the RNA polymerase beta chain family. RNAP is composed of a core of 2 alpha, a beta and a beta' subunit. The core is associated with a delta subunit, and at least one of epsilon or omega. When a sigma factor is associated with the core the holoenzyme is formed, which can initiate transcription.

It catalyses the reaction RNA(n) + a ribonucleoside 5'-triphosphate = RNA(n+1) + diphosphate. In terms of biological role, DNA-dependent RNA polymerase catalyzes the transcription of DNA into RNA using the four ribonucleoside triphosphates as substrates. This chain is DNA-directed RNA polymerase subunit beta, found in Bacillus subtilis (strain 168).